The primary structure comprises 55 residues: Large ribosomal subunit protein bL33 (55 aa).

This sequence belongs to the bacterial ribosomal protein bL33 family.

This Hyphomonas neptunium (strain ATCC 15444) protein is Large ribosomal subunit protein bL33.